Reading from the N-terminus, the 31-residue chain is Cytochrome b6-f complex subunit 6 (31 aa).

The helical transmembrane segment at 4–24 threads the bilayer; the sequence is ITSYFGFLLAALTITSVLFIG.

This sequence belongs to the PetL family. As to quaternary structure, the 4 large subunits of the cytochrome b6-f complex are cytochrome b6, subunit IV (17 kDa polypeptide, PetD), cytochrome f and the Rieske protein, while the 4 small subunits are PetG, PetL, PetM and PetN. The complex functions as a dimer.

Its subcellular location is the plastid. It is found in the chloroplast thylakoid membrane. Its function is as follows. Component of the cytochrome b6-f complex, which mediates electron transfer between photosystem II (PSII) and photosystem I (PSI), cyclic electron flow around PSI, and state transitions. PetL is important for photoautotrophic growth as well as for electron transfer efficiency and stability of the cytochrome b6-f complex. The chain is Cytochrome b6-f complex subunit 6 from Nandina domestica (Heavenly bamboo).